The following is a 358-amino-acid chain: Pseudouridylate synthase RPUSD4, mitochondrial (358 aa).

Residues 1–12 (MRHAREVTFARL) constitute a mitochondrion transit peptide.

It belongs to the pseudouridine synthase RluA family.

The protein resides in the mitochondrion matrix. It is found in the nucleus. Its subcellular location is the cytoplasm. The catalysed reaction is uridine in 5S rRNA = pseudouridine in 5S rRNA. It catalyses the reaction a uridine in tRNA = a pseudouridine in tRNA. It carries out the reaction a uridine in mRNA = a pseudouridine in mRNA. In terms of biological role, catalyzes uridine to pseudouridine isomerization (pseudouridylation) of different mitochondrial RNA substrates. Acts on position 1397 in 16S mitochondrial ribosomal RNA (16S mt-rRNA). This modification is required for the assembly of 16S mt-rRNA into a functional mitochondrial ribosome. Acts on position 39 in mitochondrial tRNA(Phe). Also catalyzes pseudouridylation of mRNAs in nucleus: acts as a regulator of pre-mRNA splicing by mediating pseudouridylation of pre-mRNAs at locations associated with alternatively spliced regions. Pseudouridylation of pre-mRNAs near splice sites directly regulates mRNA splicing and mRNA 3'-end processing. In Danio rerio (Zebrafish), this protein is Pseudouridylate synthase RPUSD4, mitochondrial.